A 1250-amino-acid polypeptide reads, in one-letter code: TBC1 domain family member 9B (1250 aa).

2 GRAM domains span residues 142-209 and 288-356; these read LKMR…EKNA and ECYR…EKAD. Threonine 397 is subject to Phosphothreonine. The interval 397–443 is disordered; the sequence is TPSKQPGSIGSRKASVVDPSTESSPAPQEGSEQPASPASPLSSRQSF. 4 positions are modified to phosphoserine: serine 411, serine 432, serine 435, and serine 463. Over residues 414-443 the composition is skewed to polar residues; it reads DPSTESSPAPQEGSEQPASPASPLSSRQSF. The region spanning 508–695 is the Rab-GAP TBC domain; sequence GIPESLRGEL…VIVDCFFYEG (188 aa). A helical membrane pass occupies residues 668 to 688; sequence LSWFLTLFLSVMPFESAVVIV. The EF-hand domain occupies 879–914; it reads HTPLLAGRMFRLLDENKDSLINFKEFVTGMSGMYHG. Disordered stretches follow at residues 974-999, 1069-1093, and 1128-1157; these read LPQE…PDYR, SART…ELHQ, and VEGG…MSSY. A compositionally biased stretch (basic and acidic residues) spans 984–999; the sequence is SEERGEEKGTSSPDYR. At serine 1241 the chain carries Phosphoserine.

It is found in the membrane. In terms of biological role, may act as a GTPase-activating protein for Rab family protein(s). In Homo sapiens (Human), this protein is TBC1 domain family member 9B (TBC1D9B).